Here is a 128-residue protein sequence, read N- to C-terminus: UPF0325 protein YaeH (128 aa).

It belongs to the UPF0325 family.

The sequence is that of UPF0325 protein YaeH from Shigella boydii serotype 18 (strain CDC 3083-94 / BS512).